A 132-amino-acid polypeptide reads, in one-letter code: Protein NrdI (132 aa).

This sequence belongs to the NrdI family.

Its function is as follows. Probably involved in ribonucleotide reductase function. The polypeptide is Protein NrdI (Staphylococcus haemolyticus (strain JCSC1435)).